The following is an 886-amino-acid chain: Cytosolic carboxypeptidase-like protein 5 (886 aa).

The Peptidase M14 domain occupies 157–570; it reads YPFSYSDCQE…AMAIAALDMA (414 aa). Zn(2+) contacts are provided by histidine 252 and glutamate 255. The segment covering 344–354 has biased composition (low complexity); sequence SQSSSEHQPSS. A disordered region spans residues 344 to 364; it reads SQSSSEHQPSSCLPPDAPVSD. Histidine 434 lines the Zn(2+) pocket. The active-site Proton donor/acceptor is the glutamate 516. 2 disordered regions span residues 605-734 and 784-848; these read STLN…SSHK and LQAR…FSPI. Over residues 631–640 the composition is skewed to polar residues; sequence CSENTLSRAR. A compositionally biased stretch (low complexity) spans 641–666; it reads SFSTGTSAGGSSSSQQNSPQMKNSPS. Basic and acidic residues predominate over residues 696–705; sequence REPRSQDRRR. A compositionally biased stretch (low complexity) spans 714–732; sequence PAGSLAPSPAPTSSGPASS. Position 841 is a phosphoserine (serine 841).

Belongs to the peptidase M14 family. It depends on Zn(2+) as a cofactor. Expressed in brain.

The protein resides in the cytoplasm. It localises to the cytosol. The protein localises to the nucleus. Its subcellular location is the cytoskeleton. It is found in the spindle. The protein resides in the midbody. The enzyme catalyses gamma-L-glutamyl-L-glutamyl-[protein] + H2O = L-glutamyl-[protein] + L-glutamate. The catalysed reaction is (L-glutamyl)(n+1)-gamma-L-glutamyl-L-glutamyl-[protein] + H2O = (L-glutamyl)(n)-gamma-L-glutamyl-L-glutamyl-[protein] + L-glutamate. It catalyses the reaction C-terminal L-alpha-aminoacyl-L-glutamyl-[tubulin] + H2O = C-terminal L-alpha-aminoacyl-[tubulin] + L-glutamate. It carries out the reaction C-terminal L-alpha-aminoacyl-L-glutamyl-L-glutamyl-[tubulin] + H2O = C-terminal L-alpha-aminoacyl-L-glutamyl-[tubulin] + L-glutamate. Metallocarboxypeptidase that mediates deglutamylation of tubulin and non-tubulin target proteins. Catalyzes the removal of polyglutamate side chains present on the gamma-carboxyl group of glutamate residues within the C-terminal tail of alpha- and beta-tubulin. Cleaves alpha- and gamma-linked polyglutamate tubulin side-chain, as well as the branching point glutamate. Also catalyzes the removal of alpha-linked glutamate residues from the carboxy-terminus of alpha-tubulin. Mediates deglutamylation of nucleotidyltransferase CGAS, leading to CGAS antiviral defense response activation. The sequence is that of Cytosolic carboxypeptidase-like protein 5 from Homo sapiens (Human).